The primary structure comprises 862 residues: Mismatch repair endonuclease PMS2 (862 aa).

The ATP site is built by Asn45, Asp70, Glu109, Ala110, and Leu111. Basic and acidic residues-rich tracts occupy residues 391–401 (DLEKPMVEKQD), 408–444 (TGEEKKDVSISRLREAFSLRHTTENKPHSPKTPEPRR), 484–495 (PTDRAEVEKDSG), and 528–552 (GSQEHVDSQEKAPKTDDSFSDVDCH). The tract at residues 391-552 (DLEKPMVEKQ…DDSFSDVDCH (162 aa)) is disordered. At Thr573 the chain carries Phosphothreonine. A Nuclear localization signal motif is present at residues 577–580 (KRFK). Phosphothreonine is present on Thr597.

The protein belongs to the DNA mismatch repair MutL/HexB family. Heterodimer of PMS2 and MLH1 (MutL alpha); this interaction is required for the stability of both partners. Forms a ternary complex with MutS alpha (MSH2-MSH6) or MutS beta (MSH2-MSH3). Part of the BRCA1-associated genome surveillance complex (BASC), which contains BRCA1, MSH2, MSH6, MLH1, ATM, BLM, PMS2 and the RAD50-MRE11-NBS1 protein complex. This association could be a dynamic process changing throughout the cell cycle and within subnuclear domains. Interacts with MTMR15/FAN1.

It is found in the nucleus. It catalyses the reaction ATP + H2O = ADP + phosphate + H(+). Functionally, component of the post-replicative DNA mismatch repair system (MMR). Heterodimerizes with MLH1 to form MutL alpha. DNA repair is initiated by MutS alpha (MSH2-MSH6) or MutS beta (MSH2-MSH3) binding to a dsDNA mismatch, then MutL alpha is recruited to the heteroduplex. Assembly of the MutL-MutS-heteroduplex ternary complex in presence of RFC and PCNA is sufficient to activate endonuclease activity of PMS2. It introduces single-strand breaks near the mismatch and thus generates new entry points for the exonuclease EXO1 to degrade the strand containing the mismatch. DNA methylation would prevent cleavage and therefore assure that only the newly mutated DNA strand is going to be corrected. MutL alpha (MLH1-PMS2) interacts physically with the clamp loader subunits of DNA polymerase III, suggesting that it may play a role to recruit the DNA polymerase III to the site of the MMR. Also implicated in DNA damage signaling, a process which induces cell cycle arrest and can lead to apoptosis in case of major DNA damages. Possesses an ATPase activity, but in the absence of gross structural changes, ATP hydrolysis may not be necessary for proficient mismatch repair. This is Mismatch repair endonuclease PMS2 from Homo sapiens (Human).